A 728-amino-acid chain; its full sequence is Fatty acid oxidation complex subunit alpha (728 aa).

The interval 1–189 is enoyl-CoA hydratase/isomerase; it reads MLYQSETIQV…KNGLIDAVVP (189 aa). Substrate is bound at residue Asp-296. Residues 311 to 728 form a 3-hydroxyacyl-CoA dehydrogenase region; that stretch reads TIPEYAAVLG…TIAVSTGKTA (418 aa). NAD(+) contacts are provided by residues Met-324, Asp-343, 400–402, Lys-407, and Ser-429; that span reads VVE. Residue His-450 is the For 3-hydroxyacyl-CoA dehydrogenase activity of the active site. Asn-453 provides a ligand contact to NAD(+). Substrate is bound by residues Asn-500 and Tyr-660.

In the N-terminal section; belongs to the enoyl-CoA hydratase/isomerase family. This sequence in the C-terminal section; belongs to the 3-hydroxyacyl-CoA dehydrogenase family. Heterotetramer of two alpha chains (FadB) and two beta chains (FadA).

The enzyme catalyses a (3S)-3-hydroxyacyl-CoA + NAD(+) = a 3-oxoacyl-CoA + NADH + H(+). The catalysed reaction is a (3S)-3-hydroxyacyl-CoA = a (2E)-enoyl-CoA + H2O. It catalyses the reaction a 4-saturated-(3S)-3-hydroxyacyl-CoA = a (3E)-enoyl-CoA + H2O. It carries out the reaction (3S)-3-hydroxybutanoyl-CoA = (3R)-3-hydroxybutanoyl-CoA. The enzyme catalyses a (3Z)-enoyl-CoA = a 4-saturated (2E)-enoyl-CoA. The catalysed reaction is a (3E)-enoyl-CoA = a 4-saturated (2E)-enoyl-CoA. Its pathway is lipid metabolism; fatty acid beta-oxidation. In terms of biological role, involved in the aerobic and anaerobic degradation of long-chain fatty acids via beta-oxidation cycle. Catalyzes the formation of 3-oxoacyl-CoA from enoyl-CoA via L-3-hydroxyacyl-CoA. It can also use D-3-hydroxyacyl-CoA and cis-3-enoyl-CoA as substrate. The sequence is that of Fatty acid oxidation complex subunit alpha from Photorhabdus laumondii subsp. laumondii (strain DSM 15139 / CIP 105565 / TT01) (Photorhabdus luminescens subsp. laumondii).